The sequence spans 362 residues: Molybdenum import ATP-binding protein ModC (362 aa).

The ABC transporter domain occupies 4-238; that stretch reads AGEAAIRARF…LDLPIRLGED (235 aa). 38 to 45 is a binding site for ATP; sequence GHSGSGKT. Residues 297 to 362 enclose the Mop domain; the sequence is GTSILNTLPA…AQIKAVALVG (66 aa).

It belongs to the ABC transporter superfamily. Molybdate importer (TC 3.A.1.8) family. As to quaternary structure, the complex is composed of two ATP-binding proteins (ModC), two transmembrane proteins (ModB) and a solute-binding protein (ModA).

It is found in the cell inner membrane. It carries out the reaction molybdate(out) + ATP + H2O = molybdate(in) + ADP + phosphate + H(+). Part of the ABC transporter complex ModABC involved in molybdenum import. Responsible for energy coupling to the transport system. The sequence is that of Molybdenum import ATP-binding protein ModC from Thiobacillus denitrificans (strain ATCC 25259 / T1).